The following is a 190-amino-acid chain: NADH-quinone oxidoreductase subunit B (190 aa).

Positions 39, 40, 104, and 135 each coordinate [4Fe-4S] cluster.

This sequence belongs to the complex I 20 kDa subunit family. In terms of assembly, NDH-1 is composed of 14 different subunits. Subunits NuoB, C, D, E, F, and G constitute the peripheral sector of the complex. [4Fe-4S] cluster is required as a cofactor.

The protein resides in the cell inner membrane. It carries out the reaction a quinone + NADH + 5 H(+)(in) = a quinol + NAD(+) + 4 H(+)(out). NDH-1 shuttles electrons from NADH, via FMN and iron-sulfur (Fe-S) centers, to quinones in the respiratory chain. The immediate electron acceptor for the enzyme in this species is believed to be a menaquinone. Couples the redox reaction to proton translocation (for every two electrons transferred, four hydrogen ions are translocated across the cytoplasmic membrane), and thus conserves the redox energy in a proton gradient. The sequence is that of NADH-quinone oxidoreductase subunit B from Chlorobium chlorochromatii (strain CaD3).